The sequence spans 121 residues: Protein ripply2.1 (121 aa).

The segment at 1–69 (MEPNQQRSCG…DKGKPPSFQH (69 aa)) is disordered. The WRPW motif motif lies at 29–32 (WRPW). The segment covering 39-57 (HVQNPPTAQQQFYSDNQSH) has biased composition (polar residues). The interval 69-104 (HPVKLFWPKSRCYDFMYQEAEELLRHFPVQATISLY) is ripply homology domain.

Belongs to the ripply family. As to expression, expressed in the presomitic mesoderm (PSM) in the anterior halves of somitomeres S-0, S-I and S-II and in the newly formed somites.

It localises to the nucleus. Required during somitogenesis to regulate somite differentiation and the positioning of the presomitic mesoderm-front. Represses the expression of genes involved in somite segmentation by acting with the corepressor tle4 to down-regulate the transcriptional activity of tbx6. Also regulates retinoic acid signaling during somitogenesis and is necessary for the expression of aldh1a2/raldh2. This Xenopus laevis (African clawed frog) protein is Protein ripply2.1 (ripply2.1).